Reading from the N-terminus, the 172-residue chain is Ribosome maturation factor RimM (172 aa).

Residues 95-168 (DEGEFYYHQI…RVDVAIMEGL (74 aa)) form the PRC barrel domain.

The protein belongs to the RimM family. As to quaternary structure, binds ribosomal protein uS19.

Its subcellular location is the cytoplasm. An accessory protein needed during the final step in the assembly of 30S ribosomal subunit, possibly for assembly of the head region. Essential for efficient processing of 16S rRNA. May be needed both before and after RbfA during the maturation of 16S rRNA. It has affinity for free ribosomal 30S subunits but not for 70S ribosomes. The protein is Ribosome maturation factor RimM of Streptococcus uberis (strain ATCC BAA-854 / 0140J).